A 209-amino-acid chain; its full sequence is Small ribosomal subunit protein uS3 (209 aa).

The KH type-2 domain maps to 17–86 (IDEFLEKELR…NPQIEVEEIK (70 aa)).

This sequence belongs to the universal ribosomal protein uS3 family. In terms of assembly, part of the 30S ribosomal subunit.

Binds the lower part of the 30S subunit head. The chain is Small ribosomal subunit protein uS3 from Thermococcus kodakarensis (strain ATCC BAA-918 / JCM 12380 / KOD1) (Pyrococcus kodakaraensis (strain KOD1)).